We begin with the raw amino-acid sequence, 262 residues long: Acyl-[acyl-carrier-protein]--UDP-N-acetylglucosamine O-acyltransferase (262 aa).

Belongs to the transferase hexapeptide repeat family. LpxA subfamily. Homotrimer.

It is found in the cytoplasm. The catalysed reaction is a (3R)-hydroxyacyl-[ACP] + UDP-N-acetyl-alpha-D-glucosamine = a UDP-3-O-[(3R)-3-hydroxyacyl]-N-acetyl-alpha-D-glucosamine + holo-[ACP]. The protein operates within glycolipid biosynthesis; lipid IV(A) biosynthesis; lipid IV(A) from (3R)-3-hydroxytetradecanoyl-[acyl-carrier-protein] and UDP-N-acetyl-alpha-D-glucosamine: step 1/6. Its function is as follows. Involved in the biosynthesis of lipid A, a phosphorylated glycolipid that anchors the lipopolysaccharide to the outer membrane of the cell. The polypeptide is Acyl-[acyl-carrier-protein]--UDP-N-acetylglucosamine O-acyltransferase (Shigella flexneri serotype 5b (strain 8401)).